Consider the following 374-residue polypeptide: UPF0754 membrane protein NWMN_1738 (374 aa).

Transmembrane regions (helical) follow at residues 4 to 24 and 354 to 374; these read LFII…TNVI and SLGF…AIFV.

The protein belongs to the UPF0754 family.

It is found in the cell membrane. This chain is UPF0754 membrane protein NWMN_1738, found in Staphylococcus aureus (strain Newman).